A 777-amino-acid chain; its full sequence is Serine/threonine-protein kinase PLK4 (777 aa).

The 255-residue stretch at 14–268 folds into the Protein kinase domain; that stretch reads YEVQHLLGKG…LEQVLRHPFL (255 aa). ATP-binding positions include 20 to 28 and lysine 43; that span reads LGKGGFASV. Aspartate 139 functions as the Proton acceptor in the catalytic mechanism. Polar residues predominate over residues 371–381; sequence TNNLAPFTSDS. The interval 371 to 390 is disordered; that stretch reads TNNLAPFTSDSDMIPSPVGE. Residues 390 to 507 enclose the Cryptic POLO box 1 (CPB1) domain; sequence EKRLLMPPLE…ARFVGLVKSK (118 aa). The Cryptic POLO box 2 (CPB2) domain maps to 508 to 611; that stretch reads TPKITFFSSL…GRRPAADMHA (104 aa). Positions 669 to 748 constitute a POLO box domain; the sequence is PIKRITVPEI…MPQLQMKLKC (80 aa).

This sequence belongs to the protein kinase superfamily. Ser/Thr protein kinase family. CDC5/Polo subfamily. Homodimer. Ubiquitinated by the SCF(Slimb) ubiquitin ligase complex; leading to its degradation by the proteasome during interphase and regulating centriole number and ensuring the block to centriole reduplication.

It localises to the cytoplasm. It is found in the cytoskeleton. The protein resides in the microtubule organizing center. Its subcellular location is the centrosome. The protein localises to the centriole. It carries out the reaction L-seryl-[protein] + ATP = O-phospho-L-seryl-[protein] + ADP + H(+). The enzyme catalyses L-threonyl-[protein] + ATP = O-phospho-L-threonyl-[protein] + ADP + H(+). Serine/threonine-protein kinase that plays a central role in centriole duplication. Able to trigger procentriole formation on the surface of the mother centriole cylinder, using mother centriole as a platform, leading to the recruitment of centriole biogenesis proteins such as sas-6. When overexpressed, it is able to induce centrosome amplification through the simultaneous generation of multiple procentrioles adjoining each parental centriole during S phase. Centrosome amplification following overexpression can initiate tumorigenesis, highlighting the importance of centrosome regulation in cancers. This chain is Serine/threonine-protein kinase PLK4 (SAK), found in Drosophila persimilis (Fruit fly).